We begin with the raw amino-acid sequence, 204 residues long: Large ribosomal subunit protein eL15 (204 aa).

The protein belongs to the eukaryotic ribosomal protein eL15 family. In terms of assembly, component of the large ribosomal subunit.

It is found in the cytoplasm. Functionally, component of the large ribosomal subunit. The ribosome is a large ribonucleoprotein complex responsible for the synthesis of proteins in the cell. This Megalobrama amblycephala (Chinese blunt snout bream) protein is Large ribosomal subunit protein eL15 (rpl15).